Consider the following 697-residue polypeptide: Portal protein (697 aa).

Residues 633–697 form a disordered region; sequence MSREAAGGVP…RRAGGPYGFH (65 aa). Over residues 664-689 the composition is skewed to basic and acidic residues; sequence ITADEERRGPERVGRFRNGGPDDPRR.

Belongs to the herpesviridae portal protein family. In terms of assembly, homododecamerizes. Interacts with terminase subunits TRM1 and TRM3.

It localises to the virion. The protein resides in the host nucleus. Its function is as follows. Forms a portal in the viral capsid through which viral DNA is translocated during DNA packaging. Assembles as a dodecamer at a single fivefold axe of the T=16 icosahedric capsid. Binds to the molecular motor that translocates the viral DNA, termed terminase. This is Portal protein (UL104) from Homo sapiens (Human).